We begin with the raw amino-acid sequence, 354 residues long: MATVVMEQIGRLFINAQQLRQIPRFLESAFPKLPCTVMVSDVPWVFRESHIITGYRPPDQNWRYYFLTLFQRHNESVNVWTHLLASLIILVKFQELSETVDFLRDPHAQPMFILLLAAFTYLGCSALAHLLSAKSEISHYTFYFLDYVGVAVYQYGSALAHFYYVVEEEWHAQVRTFFLPASAFLAWLSCTGCCYGKYASPKLPKFVHKLFQVVPSGLAYCLDISPVLHRIYRCYSSEHWCADQAVVYHCYQVLFFLISAYFFSYPHPERWFPGRCDFIGQGHQIFHVFLVLCTLVQIEAVRLDYTERRRLYEHLHGDLAHDAVALFIFTACCSALTAFYVRKRVKTYLEEKQE.

The Cytoplasmic segment spans residues 1–76; sequence MATVVMEQIG…LTLFQRHNES (76 aa). Residues 77–97 form a helical membrane-spanning segment; the sequence is VNVWTHLLASLIILVKFQELS. The Extracellular segment spans residues 98 to 110; sequence ETVDFLRDPHAQP. Residues 111–131 traverse the membrane as a helical segment; sequence MFILLLAAFTYLGCSALAHLL. Topologically, residues 132–141 are cytoplasmic; that stretch reads SAKSEISHYT. The chain crosses the membrane as a helical span at residues 142–162; the sequence is FYFLDYVGVAVYQYGSALAHF. Topologically, residues 163–175 are extracellular; the sequence is YYVVEEEWHAQVR. A helical transmembrane segment spans residues 176 to 196; it reads TFFLPASAFLAWLSCTGCCYG. Topologically, residues 197 to 244 are cytoplasmic; it reads KYASPKLPKFVHKLFQVVPSGLAYCLDISPVLHRIYRCYSSEHWCADQ. A helical transmembrane segment spans residues 245–265; that stretch reads AVVYHCYQVLFFLISAYFFSY. The Extracellular portion of the chain corresponds to 266–277; that stretch reads PHPERWFPGRCD. Residues 278 to 298 form a helical membrane-spanning segment; the sequence is FIGQGHQIFHVFLVLCTLVQI. The Cytoplasmic segment spans residues 299-318; that stretch reads EAVRLDYTERRRLYEHLHGD. A helical membrane pass occupies residues 319–339; sequence LAHDAVALFIFTACCSALTAF. The Extracellular portion of the chain corresponds to 340–354; that stretch reads YVRKRVKTYLEEKQE.

It belongs to the ADIPOR family.

The protein localises to the cell membrane. In terms of biological role, steroid membrane receptor. Signals upon progestin binding, resulting in rapid activation of MAPK and down-regulation of adenylyl cyclase activity. Interacts with steroids with varying degrees of affinity, showing specificity for activation by the maturation-inducing steroid (MIS) 4-pregnen-17,20beta-diol-3-one (17,20beta-DHP). Capable of mediating progestin-induced oocyte maturation. The chain is Membrane progestin receptor alpha-B (paqr7b) from Danio rerio (Zebrafish).